The following is a 143-amino-acid chain: Large ribosomal subunit protein uL11 (143 aa).

This sequence belongs to the universal ribosomal protein uL11 family. In terms of assembly, part of the ribosomal stalk of the 50S ribosomal subunit. Interacts with L10 and the large rRNA to form the base of the stalk. L10 forms an elongated spine to which L12 dimers bind in a sequential fashion forming a multimeric L10(L12)X complex. In terms of processing, one or more lysine residues are methylated.

Forms part of the ribosomal stalk which helps the ribosome interact with GTP-bound translation factors. This Pseudomonas syringae pv. tomato (strain ATCC BAA-871 / DC3000) protein is Large ribosomal subunit protein uL11.